The sequence spans 253 residues: 5-oxoprolinase subunit A (253 aa).

It belongs to the LamB/PxpA family. In terms of assembly, forms a complex composed of PxpA, PxpB and PxpC.

The enzyme catalyses 5-oxo-L-proline + ATP + 2 H2O = L-glutamate + ADP + phosphate + H(+). Its function is as follows. Catalyzes the cleavage of 5-oxoproline to form L-glutamate coupled to the hydrolysis of ATP to ADP and inorganic phosphate. This Bacillus cereus (strain AH187) protein is 5-oxoprolinase subunit A.